The following is a 430-amino-acid chain: 3-phosphoshikimate 1-carboxyvinyltransferase (430 aa).

3 residues coordinate 3-phosphoshikimate: Lys-23, Ser-24, and Arg-28. Lys-23 provides a ligand contact to phosphoenolpyruvate. Phosphoenolpyruvate-binding residues include Gly-93 and Arg-121. Positions 166, 168, 313, and 340 each coordinate 3-phosphoshikimate. Position 168 (Gln-168) interacts with phosphoenolpyruvate. Asp-313 (proton acceptor) is an active-site residue. 2 residues coordinate phosphoenolpyruvate: Arg-344 and Arg-386.

The protein belongs to the EPSP synthase family. Monomer.

It is found in the cytoplasm. The enzyme catalyses 3-phosphoshikimate + phosphoenolpyruvate = 5-O-(1-carboxyvinyl)-3-phosphoshikimate + phosphate. It functions in the pathway metabolic intermediate biosynthesis; chorismate biosynthesis; chorismate from D-erythrose 4-phosphate and phosphoenolpyruvate: step 6/7. Catalyzes the transfer of the enolpyruvyl moiety of phosphoenolpyruvate (PEP) to the 5-hydroxyl of shikimate-3-phosphate (S3P) to produce enolpyruvyl shikimate-3-phosphate and inorganic phosphate. This chain is 3-phosphoshikimate 1-carboxyvinyltransferase, found in Anaeromyxobacter sp. (strain Fw109-5).